Reading from the N-terminus, the 171-residue chain is Ribosome-binding factor A (171 aa).

The span at 120–132 (AALAAAAQPAGDP) shows a compositional bias: low complexity. The segment at 120–171 (AALAAAAQPAGDPDPYKKPVDHTDDWDEDDEDDRDGDDAVDALDAAADVPRL) is disordered. A compositionally biased stretch (basic and acidic residues) spans 133–142 (DPYKKPVDHT). Residues 143–160 (DDWDEDDEDDRDGDDAVD) show a composition bias toward acidic residues. Low complexity predominate over residues 161-171 (ALDAAADVPRL).

Belongs to the RbfA family. Monomer. Binds 30S ribosomal subunits, but not 50S ribosomal subunits or 70S ribosomes.

Its subcellular location is the cytoplasm. One of several proteins that assist in the late maturation steps of the functional core of the 30S ribosomal subunit. Associates with free 30S ribosomal subunits (but not with 30S subunits that are part of 70S ribosomes or polysomes). Required for efficient processing of 16S rRNA. May interact with the 5'-terminal helix region of 16S rRNA. This is Ribosome-binding factor A from Kineococcus radiotolerans (strain ATCC BAA-149 / DSM 14245 / SRS30216).